The sequence spans 227 residues: Uracil-DNA glycosylase (227 aa).

The active-site Proton acceptor is Asp-65.

This sequence belongs to the uracil-DNA glycosylase (UDG) superfamily. UNG family.

The protein resides in the cytoplasm. It catalyses the reaction Hydrolyzes single-stranded DNA or mismatched double-stranded DNA and polynucleotides, releasing free uracil.. In terms of biological role, excises uracil residues from the DNA which can arise as a result of misincorporation of dUMP residues by DNA polymerase or due to deamination of cytosine. The polypeptide is Uracil-DNA glycosylase (Buchnera aphidicola subsp. Cinara cedri (strain Cc)).